The primary structure comprises 258 residues: MSLKDSAKIALSLMDLTTLNDNDTDEKVITLCQQGKTEFGTPAAVCVYPRFVPIARKALKAQGTEQVKIATVTNFPHGNNDIDIAVAETKAAVAYGADEVDVVFPYKALMAGNEQIGFELVQQCKAVCQASNVLLKVIIETGELKTAELIRKASEISIKAGADFIKTSTGKVPVNATLEYARIMLETIRDLNVADRVGFKAAGGVKTAEEAAQYLALAQEILGHDWVNSDHFRFGASSLLTNLLAALNGQANQKVSGY.

Aspartate 101 serves as the catalytic Proton donor/acceptor. Lysine 166 (schiff-base intermediate with acetaldehyde) is an active-site residue. Lysine 200 serves as the catalytic Proton donor/acceptor.

This sequence belongs to the DeoC/FbaB aldolase family. DeoC type 2 subfamily.

Its subcellular location is the cytoplasm. It carries out the reaction 2-deoxy-D-ribose 5-phosphate = D-glyceraldehyde 3-phosphate + acetaldehyde. It functions in the pathway carbohydrate degradation; 2-deoxy-D-ribose 1-phosphate degradation; D-glyceraldehyde 3-phosphate and acetaldehyde from 2-deoxy-alpha-D-ribose 1-phosphate: step 2/2. Catalyzes a reversible aldol reaction between acetaldehyde and D-glyceraldehyde 3-phosphate to generate 2-deoxy-D-ribose 5-phosphate. This is Deoxyribose-phosphate aldolase from Actinobacillus pleuropneumoniae serotype 5b (strain L20).